The chain runs to 448 residues: Thymidine phosphorylase (448 aa).

This sequence belongs to the thymidine/pyrimidine-nucleoside phosphorylase family. As to quaternary structure, homodimer.

The catalysed reaction is thymidine + phosphate = 2-deoxy-alpha-D-ribose 1-phosphate + thymine. It participates in pyrimidine metabolism; dTMP biosynthesis via salvage pathway; dTMP from thymine: step 1/2. In terms of biological role, the enzymes which catalyze the reversible phosphorolysis of pyrimidine nucleosides are involved in the degradation of these compounds and in their utilization as carbon and energy sources, or in the rescue of pyrimidine bases for nucleotide synthesis. This is Thymidine phosphorylase from Vibrio cholerae serotype O1 (strain ATCC 39315 / El Tor Inaba N16961).